A 647-amino-acid chain; its full sequence is Threonine--tRNA ligase (647 aa).

Residues 1 to 61 (MINITFPDGA…TEDGSIEIVT (61 aa)) enclose the TGS domain. The segment at 242–540 (DHRKLGKELD…LIENYKGAFP (299 aa)) is catalytic. Residues cysteine 336, histidine 387, and histidine 517 each contribute to the Zn(2+) site.

This sequence belongs to the class-II aminoacyl-tRNA synthetase family. As to quaternary structure, homodimer. The cofactor is Zn(2+).

It is found in the cytoplasm. It carries out the reaction tRNA(Thr) + L-threonine + ATP = L-threonyl-tRNA(Thr) + AMP + diphosphate + H(+). In terms of biological role, catalyzes the attachment of threonine to tRNA(Thr) in a two-step reaction: L-threonine is first activated by ATP to form Thr-AMP and then transferred to the acceptor end of tRNA(Thr). Also edits incorrectly charged L-seryl-tRNA(Thr). This is Threonine--tRNA ligase from Streptococcus pneumoniae (strain ATCC 700669 / Spain 23F-1).